Here is a 254-residue protein sequence, read N- to C-terminus: Nickel import ATP-binding protein NikD (254 aa).

The ABC transporter domain occupies 2-241 (PQQIELRNIA…PKHTVTRSLV (240 aa)). 36-43 (GGSGSGKS) serves as a coordination point for ATP.

This sequence belongs to the ABC transporter superfamily. Nickel importer (TC 3.A.1.5.3) family. In terms of assembly, the complex is composed of two ATP-binding proteins (NikD and NikE), two transmembrane proteins (NikB and NikC) and a solute-binding protein (NikA).

The protein resides in the cell inner membrane. The catalysed reaction is Ni(2+)(out) + ATP + H2O = Ni(2+)(in) + ADP + phosphate + H(+). In terms of biological role, part of the ABC transporter complex NikABCDE involved in nickel import. Responsible for energy coupling to the transport system. The protein is Nickel import ATP-binding protein NikD of Shigella flexneri serotype 5b (strain 8401).